The sequence spans 340 residues: DNA-directed RNA polymerase subunit alpha (340 aa).

The interval 1–233 (MYKNWRDLIR…EQLSIFINFD (233 aa)) is alpha N-terminal domain (alpha-NTD). The tract at residues 246 to 340 (DEIDKINENL…RLRGEQNEEE (95 aa)) is alpha C-terminal domain (alpha-CTD).

It belongs to the RNA polymerase alpha chain family. Homodimer. The RNAP catalytic core consists of 2 alpha, 1 beta, 1 beta' and 1 omega subunit. When a sigma factor is associated with the core the holoenzyme is formed, which can initiate transcription.

It carries out the reaction RNA(n) + a ribonucleoside 5'-triphosphate = RNA(n+1) + diphosphate. In terms of biological role, DNA-dependent RNA polymerase catalyzes the transcription of DNA into RNA using the four ribonucleoside triphosphates as substrates. This chain is DNA-directed RNA polymerase subunit alpha, found in Pelobacter propionicus (strain DSM 2379 / NBRC 103807 / OttBd1).